Here is a 3535-residue protein sequence, read N- to C-terminus: Lysosomal-trafficking regulator (3535 aa).

Residues 412-436 (MESSASTAMPKQQQHPRHKRQRSSQ) are disordered. A WD 1 repeat occupies 689–736 (TLSRRLIQLQLNSSDRASQLFQALLYKCSKHSRAKFWLDESSTPAKLE). Residues 1066-1096 (STHQEPTGVVNSPSGDSQQPRPRARSFNSGS) are compositionally biased toward polar residues. Disordered regions lie at residues 1066–1132 (STHQ…NAGV) and 1592–1613 (GEGQ…TLDG). The span at 1596-1610 (PTGRSPGSSSSSRST) shows a compositional bias: low complexity. The 99-residue stretch at 2686 to 2784 (SLNSQILYNF…MREVFCDKIV (99 aa)) folds into the BEACH-type PH domain. Positions 2784–3081 (VATPDQSKVI…QLFKSPHPAS (298 aa)) constitute a BEACH domain. The tract at residues 3254 to 3287 (GIGGGGSERVDEAGNLHPTSSASSVNSSSISSGG) is disordered. Positions 3273 to 3285 (SSASSVNSSSISS) are enriched in low complexity. 3 WD repeats span residues 3307-3346 (RHTD…YVRT), 3442-3486 (VHED…FVSE), and 3489-3527 (TGTS…GNAP).

Interacts with Rab5; the interaction is independent of GDP or GTP. Interacts with msps.

It is found in the vesicle. The protein resides in the cytoplasm. Its subcellular location is the cytoskeleton. The protein localises to the spindle. It localises to the spindle pole. Adapter protein that regulates intracellular membrane fusion reactions. Regulates the fusion of lysosome-related organelles. Promotes microtubules nucleation and centrosomal recruitment of microtubule nucleating proteins such as msps. In syncytial embryos, during the formation of yolk granules, suppresses vesicle fusion events with lipid droplets, possibly via interaction with Rab5. In the eye, regulates pigment granules size. In hemocytes, required for the late steps of bacteria phagocytosis. In fat body, required for autophagosome maturation. This Drosophila melanogaster (Fruit fly) protein is Lysosomal-trafficking regulator.